Reading from the N-terminus, the 220-residue chain is Deoxyribose-phosphate aldolase (220 aa).

The active-site Proton donor/acceptor is aspartate 89. Catalysis depends on lysine 151, which acts as the Schiff-base intermediate with acetaldehyde. Residue lysine 180 is the Proton donor/acceptor of the active site.

It belongs to the DeoC/FbaB aldolase family. DeoC type 1 subfamily.

It localises to the cytoplasm. It catalyses the reaction 2-deoxy-D-ribose 5-phosphate = D-glyceraldehyde 3-phosphate + acetaldehyde. Its pathway is carbohydrate degradation; 2-deoxy-D-ribose 1-phosphate degradation; D-glyceraldehyde 3-phosphate and acetaldehyde from 2-deoxy-alpha-D-ribose 1-phosphate: step 2/2. Functionally, catalyzes a reversible aldol reaction between acetaldehyde and D-glyceraldehyde 3-phosphate to generate 2-deoxy-D-ribose 5-phosphate. This chain is Deoxyribose-phosphate aldolase, found in Staphylococcus epidermidis (strain ATCC 12228 / FDA PCI 1200).